Consider the following 35-residue polypeptide: Ranatuerin-2SPa (35 aa).

Residues Cys28 and Cys33 are joined by a disulfide bond.

Expressed by the skin glands.

It localises to the secreted. Its function is as follows. Antibacterial activity against Gram-positive bacterium S.aureus. Shows no detectable hemolytic activity towards human erythrocytes. The chain is Ranatuerin-2SPa from Lithobates septentrionalis (Mink frog).